Here is a 1265-residue protein sequence, read N- to C-terminus: Kinesin-related protein 13 (1265 aa).

The Kinesin motor domain maps to asparagine 23 to isoleucine 350. Glycine 106 to threonine 113 provides a ligand contact to ATP. Residues leucine 331–isoleucine 459 adopt a coiled-coil conformation. 5 disordered regions span residues lysine 918–isoleucine 1026, serine 1085–leucine 1119, leucine 1127–serine 1146, leucine 1158–leucine 1214, and phenylalanine 1245–lysine 1265. Over residues isoleucine 930–serine 951 the composition is skewed to low complexity. Composition is skewed to polar residues over residues histidine 960–cysteine 980, leucine 1003–isoleucine 1026, and serine 1085–leucine 1097. Low complexity-rich tracts occupy residues glutamine 1100–leucine 1119 and glutamine 1128–serine 1146. Positions leucine 1158–aspartate 1169 are enriched in acidic residues. Residues serine 1174–valine 1195 show a composition bias toward low complexity. Polar residues predominate over residues threonine 1250–lysine 1265.

It belongs to the TRAFAC class myosin-kinesin ATPase superfamily. Kinesin family. BimC subfamily.

It is found in the cytoplasm. It localises to the cytoskeleton. Its function is as follows. Microtubule-associated force-producing protein that plays a role in organelle transport. Its motor activity is directed toward the microtubule's plus end. Cooperates with dynein to control the spindle elongation rate, but is dispensable for mitosis. In Dictyostelium discoideum (Social amoeba), this protein is Kinesin-related protein 13 (kif13).